A 353-amino-acid chain; its full sequence is S-adenosylmethionine:tRNA ribosyltransferase-isomerase (353 aa).

The protein belongs to the QueA family. In terms of assembly, monomer.

It is found in the cytoplasm. It catalyses the reaction 7-aminomethyl-7-carbaguanosine(34) in tRNA + S-adenosyl-L-methionine = epoxyqueuosine(34) in tRNA + adenine + L-methionine + 2 H(+). It functions in the pathway tRNA modification; tRNA-queuosine biosynthesis. Transfers and isomerizes the ribose moiety from AdoMet to the 7-aminomethyl group of 7-deazaguanine (preQ1-tRNA) to give epoxyqueuosine (oQ-tRNA). This Blochmanniella floridana protein is S-adenosylmethionine:tRNA ribosyltransferase-isomerase.